The primary structure comprises 79 residues: MASLMEVRDMLALQGRMEAKQLSARLRTPQPLIDAMLERMEAMGKVVRISETSEGCLSGSCKSCPEGKAACQQEWWALR.

4 residues coordinate iron-sulfur cluster: cysteine 56, cysteine 61, cysteine 64, and cysteine 71.

This sequence belongs to the FeoC family.

Functionally, may function as a transcriptional regulator that controls feoABC expression. This chain is Probable [Fe-S]-dependent transcriptional repressor, found in Klebsiella pneumoniae (strain 342).